Reading from the N-terminus, the 414-residue chain is TAR DNA-binding protein 43 (414 aa).

Residues Lys-79, Lys-84, Lys-95, Lys-102, and Lys-181 each participate in a glycyl lysine isopeptide (Lys-Gly) (interchain with G-Cter in SUMO2) cross-link. 2 RRM domains span residues 104-200 (SDLI…RCTE) and 191-262 (RKVF…NAEP). A Phosphoserine modification is found at Ser-183. An interaction with UBQLN2 region spans residues 216–414 (DVMDVFIPKP…MDSKSSGWGM (199 aa)). The segment covering 261 to 274 (EPKHNSNRQLERSG) has biased composition (basic and acidic residues). 2 disordered regions span residues 261-303 (EPKH…GNNQ) and 341-373 (ASQQ…GNNS). Lys-263 is covalently cross-linked (Glycyl lysine isopeptide (Lys-Gly) (interchain with G-Cter in SUMO2)). Positions 275–303 (RFGGNPGGFGNQGGFGNSRGGGAGLGNNQ) are enriched in gly residues. Ser-292 is subject to Phosphoserine. The residue at position 293 (Arg-293) is an Omega-N-methylarginine. Over residues 342-358 (SQQNQSGPSGNNQNQGN) the composition is skewed to low complexity.

As to quaternary structure, monomer and component of the SFPQ-NONO complex, which is probably a heterotetramer of two 52 kDa (NONO) and two 100 kDa (SFPQ) subunits. NONO is a component of spliceosome and U5.4/6 snRNP complexes. Interacts with CPNE4 (via VWFA domain). Forms heterodimers with PSPC1; this involves formation of a coiled coil domain by helices from both proteins. Part of complex consisting of SFPQ, NONO and MATR3. Part of a complex consisting of SFPQ, NONO and NR5A1. Part of a complex consisting of SFPQ, NONO and TOP1. Interacts with SPI1. Interacts with RNF43. Interacts with PER1 and PER2. Part of the HDP-RNP complex composed of at least HEXIM1, PRKDC, XRCC5, XRCC6, paraspeckle proteins (SFPQ, NONO, PSPC1, RBM14, and MATR3) and NEAT1 RNA. Interacts (via second RRM domain) with WASL; the interaction is direct. Component of a multiprotein complex with WASL and SFPQ. Interacts with ERCC6. Interacts (via DNA-binding domain) with TET1. Hyperphosphorylated. Post-translationally, ubiquitinated.

Its subcellular location is the nucleus. The protein resides in the nucleolus. It is found in the nucleus speckle. It localises to the chromosome. The protein localises to the mitochondrion. Its function is as follows. DNA- and RNA binding protein, involved in several nuclear processes. Binds the conventional octamer sequence in double-stranded DNA. Also binds single-stranded DNA and RNA at a site independent of the duplex site. Involved in pre-mRNA splicing, probably as a heterodimer with SFPQ. Interacts with U5 snRNA, probably by binding to a purine-rich sequence located on the 3' side of U5 snRNA stem 1b. Together with PSPC1, required for the formation of nuclear paraspeckles. The SFPQ-NONO heteromer associated with MATR3 may play a role in nuclear retention of defective RNAs. The SFPQ-NONO heteromer may be involved in DNA unwinding by modulating the function of topoisomerase I/TOP1. The SFPQ-NONO heteromer may be involved in DNA non-homologous end joining (NHEJ) required for double-strand break repair and V(D)J recombination and may stabilize paired DNA ends. In vitro, the complex strongly stimulates DNA end joining, binds directly to the DNA substrates and cooperates with the Ku70/G22P1-Ku80/XRCC5 (Ku) dimer to establish a functional preligation complex. NONO is involved in transcriptional regulation. The SFPQ-NONO-NR5A1 complex binds to the CYP17 promoter and regulates basal and cAMP-dependent transcriptional activity. NONO binds to an enhancer element in long terminal repeats of endogenous intracisternal A particles (IAPs) and activates transcription. Regulates the circadian clock by repressing the transcriptional activator activity of the CLOCK-BMAL1 heterodimer. Important for the functional organization of GABAergic synapses. Plays a specific and important role in the regulation of synaptic RNAs and GPHN/gephyrin scaffold structure, through the regulation of GABRA2 transcript. Plays a key role during neuronal differentiation by recruiting TET1 to genomic loci and thereby regulating 5-hydroxymethylcytosine levels. Plays a role in the regulation of DNA virus-mediated innate immune response by assembling into the HDP-RNP complex, a complex that serves as a platform for IRF3 phosphorylation and subsequent innate immune response activation through the cGAS-STING pathway. This chain is TAR DNA-binding protein 43 (TARDBP), found in Pongo abelii (Sumatran orangutan).